A 197-amino-acid chain; its full sequence is Ribosomal RNA large subunit methyltransferase E (197 aa).

Gly52, Trp54, Asp72, Asp88, and Asp112 together coordinate S-adenosyl-L-methionine. Lys152 acts as the Proton acceptor in catalysis.

The protein belongs to the class I-like SAM-binding methyltransferase superfamily. RNA methyltransferase RlmE family.

The protein resides in the cytoplasm. It catalyses the reaction uridine(2552) in 23S rRNA + S-adenosyl-L-methionine = 2'-O-methyluridine(2552) in 23S rRNA + S-adenosyl-L-homocysteine + H(+). Specifically methylates the uridine in position 2552 of 23S rRNA at the 2'-O position of the ribose in the fully assembled 50S ribosomal subunit. The protein is Ribosomal RNA large subunit methyltransferase E of Nitrosopumilus maritimus (strain SCM1).